Here is a 486-residue protein sequence, read N- to C-terminus: ATP synthase subunit beta (486 aa).

164–171 provides a ligand contact to ATP; it reads GGAGVGKT.

The protein belongs to the ATPase alpha/beta chains family. In terms of assembly, F-type ATPases have 2 components, CF(1) - the catalytic core - and CF(0) - the membrane proton channel. CF(1) has five subunits: alpha(3), beta(3), gamma(1), delta(1), epsilon(1). CF(0) has four main subunits: a(1), b(1), b'(1) and c(9-12).

Its subcellular location is the cellular thylakoid membrane. The enzyme catalyses ATP + H2O + 4 H(+)(in) = ADP + phosphate + 5 H(+)(out). In terms of biological role, produces ATP from ADP in the presence of a proton gradient across the membrane. The catalytic sites are hosted primarily by the beta subunits. The polypeptide is ATP synthase subunit beta (Prochlorococcus marinus (strain AS9601)).